We begin with the raw amino-acid sequence, 389 residues long: Adenylyltransferase and sulfurtransferase uba4 (389 aa).

Residues Gly-40, Asp-61, Ser-68 to Arg-72, Lys-85, and Asp-129 to Thr-130 contribute to the ATP site. 2 residues coordinate Zn(2+): Cys-171 and Cys-174. The active-site Glycyl thioester intermediate; for adenylyltransferase activity is Cys-188. The Zn(2+) site is built by Cys-252 and Cys-255. The Rhodanese domain maps to Ala-298–Pro-387. Cys-347 serves as the catalytic Cysteine persulfide intermediate.

This sequence in the N-terminal section; belongs to the HesA/MoeB/ThiF family. UBA4 subfamily. Requires Zn(2+) as cofactor.

It is found in the cytoplasm. It localises to the cytosol. It carries out the reaction [molybdopterin-synthase sulfur-carrier protein]-C-terminal Gly-Gly + ATP + H(+) = [molybdopterin-synthase sulfur-carrier protein]-C-terminal Gly-Gly-AMP + diphosphate. The enzyme catalyses [molybdopterin-synthase sulfur-carrier protein]-C-terminal Gly-Gly-AMP + S-sulfanyl-L-cysteinyl-[cysteine desulfurase] + AH2 = [molybdopterin-synthase sulfur-carrier protein]-C-terminal-Gly-aminoethanethioate + L-cysteinyl-[cysteine desulfurase] + A + AMP + 2 H(+). The protein operates within tRNA modification; 5-methoxycarbonylmethyl-2-thiouridine-tRNA biosynthesis. Its pathway is cofactor biosynthesis; molybdopterin biosynthesis. Plays a central role in 2-thiolation of mcm(5)S(2)U at tRNA wobble positions of cytosolic tRNA(Lys), tRNA(Glu) and tRNA(Gln). Also essential during biosynthesis of the molybdenum cofactor. Acts by mediating the C-terminal thiocarboxylation of sulfur carriers URM1 and CNX5/MOCS2A. Its N-terminus first activates urm1 and mocs2a as acyl-adenylates (-COAMP), then the persulfide sulfur on the catalytic cysteine is transferred to URM1 and CNX5/MOCS2A to form thiocarboxylation (-COSH) of their C-terminus. The reaction probably involves hydrogen sulfide that is generated from the persulfide intermediate and that acts as a nucleophile towards URM1 and CNX5/MOCS2A. Subsequently, a transient disulfide bond is formed. Does not use thiosulfate as sulfur donor; NFS1 probably acting as a sulfur donor for thiocarboxylation reactions. Required for growth on nitrate as a sole nitrogen source. The chain is Adenylyltransferase and sulfurtransferase uba4 from Ogataea parapolymorpha (strain ATCC 26012 / BCRC 20466 / JCM 22074 / NRRL Y-7560 / DL-1) (Yeast).